We begin with the raw amino-acid sequence, 471 residues long: Venom prothrombin activator vestarin-D2 (471 aa).

A signal peptide spans 1–20 (MAPQLLLCLILTFLWSLPEA). The propeptide occupies 21-40 (ESNVFLKSNVANRFLQRTKR). The region spanning 41–86 (ANSIFEEIRPGNIERECVEEKCSKEEAREVFQDNEKTEAFWTVYVD) is the Gla domain. Glu-46, Glu-47, Glu-54, Glu-56, Glu-59, Glu-60, Glu-65, Glu-66, Glu-69, and Glu-75 each carry 4-carboxyglutamate. Cys-57 and Cys-62 form a disulfide bridge. In terms of domain architecture, EGF-like 1; calcium-binding spans 86 to 122 (DGDQCLSNPCHYRGTCKDGIGSYTCTCLPGYEGKNCE). Cystine bridges form between Cys-90-Cys-101, Cys-95-Cys-110, Cys-112-Cys-121, Cys-129-Cys-140, Cys-136-Cys-149, Cys-151-Cys-164, Cys-172-Cys-333, Cys-233-Cys-238, Cys-381-Cys-395, and Cys-406-Cys-434. Ser-92 carries an O-linked (Hex...) serine glycan. Positions 129 to 164 (CRLFNGNCWHFCKTVQNDTQCSCAEGYRLGVDGFSC) constitute an EGF-like 2 domain. Positions 182–226 (REASLPDFHFSDDYDAIDENNLVETVQSQSATLLKKSDNPSPDIR) are cleaved as a propeptide — activation peptide. A Peptidase S1 domain is found at 227 to 458 (IVSGLDCKLG…FIPWIKTIMR (232 aa)). His-268 (charge relay system) is an active-site residue. Residue Asn-271 is glycosylated (N-linked (GlcNAc...) asparagine). Residue Asp-313 is the Charge relay system of the active site. The Charge relay system role is filled by Ser-410.

Belongs to the peptidase S1 family. Snake venom subfamily. In terms of assembly, heterodimer of a light chain and a heavy chain; disulfide-linked. Post-translationally, the vitamin K-dependent, enzymatic carboxylation of some glutamate residues allows the modified protein to bind calcium. In terms of tissue distribution, expressed by the venom gland.

Its subcellular location is the secreted. The catalysed reaction is Selective cleavage of Arg-|-Thr and then Arg-|-Ile bonds in prothrombin to form thrombin.. Snake prothrombin activator that attacks the hemostatic system of prey. This protein is functionally similar to blood coagulation factor Xa. The protein is Venom prothrombin activator vestarin-D2 of Demansia vestigiata (Lesser black whip snake).